The primary structure comprises 372 residues: Glutamine synthetase (372 aa).

The 80-residue stretch at 24 to 103 (VIAEYVWVDG…VLAECFNSDG (80 aa)) folds into the GS beta-grasp domain. The GS catalytic domain maps to 110–372 (HRHEANKLFQ…KEYERETNEQ (263 aa)).

Belongs to the glutamine synthetase family. In terms of assembly, homooctamer.

The protein resides in the cytoplasm. It catalyses the reaction L-glutamate + NH4(+) + ATP = L-glutamine + ADP + phosphate + H(+). The sequence is that of Glutamine synthetase (GLN1) from Candida glabrata (strain ATCC 2001 / BCRC 20586 / JCM 3761 / NBRC 0622 / NRRL Y-65 / CBS 138) (Yeast).